Reading from the N-terminus, the 239-residue chain is tRNA (guanine-N(7)-)-methyltransferase (239 aa).

Residues glutamate 69, glutamate 94, aspartate 121, and aspartate 144 each contribute to the S-adenosyl-L-methionine site. Residue aspartate 144 is part of the active site. Position 148 (lysine 148) interacts with substrate. An interaction with RNA region spans residues 150–155 (RHNKRR). Substrate is bound by residues aspartate 180 and 217 to 220 (TKFE).

It belongs to the class I-like SAM-binding methyltransferase superfamily. TrmB family. In terms of assembly, monomer.

The enzyme catalyses guanosine(46) in tRNA + S-adenosyl-L-methionine = N(7)-methylguanosine(46) in tRNA + S-adenosyl-L-homocysteine. The protein operates within tRNA modification; N(7)-methylguanine-tRNA biosynthesis. Functionally, catalyzes the formation of N(7)-methylguanine at position 46 (m7G46) in tRNA. This Salmonella typhimurium (strain LT2 / SGSC1412 / ATCC 700720) protein is tRNA (guanine-N(7)-)-methyltransferase.